Here is a 53-residue protein sequence, read N- to C-terminus: MLRYAAIFFIIAIIAAVFGFGGIAAGATEIAKVLFFIFVVIFLVTLLMGVMRR.

2 helical membrane-spanning segments follow: residues A5–A25 and I30–V50.

Belongs to the UPF0391 family.

The protein resides in the cell membrane. This Paraburkholderia xenovorans (strain LB400) protein is UPF0391 membrane protein Bxeno_A1464.